Here is a 39-residue protein sequence, read N- to C-terminus: Phospholipase A2 (39 aa).

H36 is an active-site residue.

It belongs to the phospholipase A2 family. Group III subfamily. Requires Ca(2+) as cofactor. In terms of tissue distribution, expressed by the venom gland.

The protein resides in the secreted. It catalyses the reaction a 1,2-diacyl-sn-glycero-3-phosphocholine + H2O = a 1-acyl-sn-glycero-3-phosphocholine + a fatty acid + H(+). PLA2 catalyzes the calcium-dependent hydrolysis of the 2-acyl groups in 3-sn-phosphoglycerides. This chain is Phospholipase A2, found in Heloderma horridum horridum (Mexican beaded lizard).